The sequence spans 428 residues: MNIAVVGLSHKTAPVEVREKLSIPEAKLEEVLAHLKSYPHIQEVAILSTCNRLEIYAVVTETEQGIIEISQFLSEKGHIPLHHLRRHLFILLHQDAVRHLMRVAAGLESLVLGEGQILAQVKNTHKLAQKYGGIGRLLDRLFKQAMTAGKRVRSETSIGTGAVSISSAAVELAQMKVIDICVCRVTIIGAGKMSRLLVQHLLSKGVSKIAIVNRSLRRAQELAGLFPEAQLQLHPLEEMINAVSVSDIVFTSTGATEPILNRSNLESIIAVNQSLMLVDISVPRNVDADVQQLEQIQSYNVDDLKAVVAANQESRRRLAQEAEGLLEEEVESFELWWRSLDTVPTISCLRDKVETIREQELEKALSRLGTEFAEKHQEVIEALTRGIVNKILHEPMVQLRAQQDIEARKRCLQSLQMLFDLDIEEQYT.

Residues T49 to R52, S109, E114 to Q116, and Q120 each bind substrate. C50 functions as the Nucleophile in the catalytic mechanism. Residue G189–S194 participates in NADP(+) binding.

The protein belongs to the glutamyl-tRNA reductase family. As to quaternary structure, homodimer.

The catalysed reaction is (S)-4-amino-5-oxopentanoate + tRNA(Glu) + NADP(+) = L-glutamyl-tRNA(Glu) + NADPH + H(+). It functions in the pathway porphyrin-containing compound metabolism; protoporphyrin-IX biosynthesis; 5-aminolevulinate from L-glutamyl-tRNA(Glu): step 1/2. Its pathway is porphyrin-containing compound metabolism; chlorophyll biosynthesis. Its function is as follows. Catalyzes the NADPH-dependent reduction of glutamyl-tRNA(Glu) to glutamate 1-semialdehyde (GSA). The chain is Glutamyl-tRNA reductase from Gloeothece citriformis (strain PCC 7424) (Cyanothece sp. (strain PCC 7424)).